The following is a 360-amino-acid chain: Peptide chain release factor 1 (360 aa).

An N5-methylglutamine modification is found at glutamine 235.

This sequence belongs to the prokaryotic/mitochondrial release factor family. Post-translationally, methylated by PrmC. Methylation increases the termination efficiency of RF1.

Its subcellular location is the cytoplasm. In terms of biological role, peptide chain release factor 1 directs the termination of translation in response to the peptide chain termination codons UAG and UAA. This Cupriavidus taiwanensis (strain DSM 17343 / BCRC 17206 / CCUG 44338 / CIP 107171 / LMG 19424 / R1) (Ralstonia taiwanensis (strain LMG 19424)) protein is Peptide chain release factor 1.